The primary structure comprises 679 residues: Methionine--tRNA ligase (679 aa).

A 'HIGH' region motif is present at residues 12-22; the sequence is PYANGAIHLGH. Zn(2+) is bound by residues Cys-143, Cys-146, Cys-156, and Cys-159. A 'KMSKS' region motif is present at residues 328–332; sequence KMSKS. Residue Lys-331 participates in ATP binding. A tRNA-binding domain is found at 577-679; that stretch reads DFAKLDLRVA…EGIRPGMQVK (103 aa).

The protein belongs to the class-I aminoacyl-tRNA synthetase family. MetG type 1 subfamily. In terms of assembly, homodimer. Zn(2+) is required as a cofactor.

It localises to the cytoplasm. It carries out the reaction tRNA(Met) + L-methionine + ATP = L-methionyl-tRNA(Met) + AMP + diphosphate. Its function is as follows. Is required not only for elongation of protein synthesis but also for the initiation of all mRNA translation through initiator tRNA(fMet) aminoacylation. The sequence is that of Methionine--tRNA ligase from Actinobacillus pleuropneumoniae serotype 5b (strain L20).